The sequence spans 388 residues: Phosphoglycerate kinase (388 aa).

Substrate-binding positions include 21–23 (DLN), Arg36, 59–62 (HLGR), Arg114, and Arg147. ATP contacts are provided by residues Lys198, Glu315, and 341-344 (GGDT).

The protein belongs to the phosphoglycerate kinase family. Monomer.

It is found in the cytoplasm. It catalyses the reaction (2R)-3-phosphoglycerate + ATP = (2R)-3-phospho-glyceroyl phosphate + ADP. Its pathway is carbohydrate degradation; glycolysis; pyruvate from D-glyceraldehyde 3-phosphate: step 2/5. In Buchnera aphidicola subsp. Schizaphis graminum (strain Sg), this protein is Phosphoglycerate kinase.